The chain runs to 1055 residues: Error-prone DNA polymerase (1055 aa).

This sequence belongs to the DNA polymerase type-C family. DnaE2 subfamily.

It is found in the cytoplasm. The catalysed reaction is DNA(n) + a 2'-deoxyribonucleoside 5'-triphosphate = DNA(n+1) + diphosphate. Its function is as follows. DNA polymerase involved in damage-induced mutagenesis and translesion synthesis (TLS). It is not the major replicative DNA polymerase. This Corynebacterium glutamicum (strain ATCC 13032 / DSM 20300 / JCM 1318 / BCRC 11384 / CCUG 27702 / LMG 3730 / NBRC 12168 / NCIMB 10025 / NRRL B-2784 / 534) protein is Error-prone DNA polymerase.